We begin with the raw amino-acid sequence, 701 residues long: Polyribonucleotide nucleotidyltransferase (701 aa).

The Mg(2+) site is built by Asp485 and Asp491. The 60-residue stretch at Pro552–Ile611 folds into the KH domain. The S1 motif domain maps to Gly621–Lys689.

It belongs to the polyribonucleotide nucleotidyltransferase family. Component of the RNA degradosome, which is a multiprotein complex involved in RNA processing and mRNA degradation. Mg(2+) serves as cofactor.

Its subcellular location is the cytoplasm. The enzyme catalyses RNA(n+1) + phosphate = RNA(n) + a ribonucleoside 5'-diphosphate. In terms of biological role, involved in mRNA degradation. Catalyzes the phosphorolysis of single-stranded polyribonucleotides processively in the 3'- to 5'-direction. The sequence is that of Polyribonucleotide nucleotidyltransferase from Shewanella piezotolerans (strain WP3 / JCM 13877).